Here is a 155-residue protein sequence, read N- to C-terminus: uncharacterized protein (155 aa).

The protein belongs to the mimivirus L6/L7/L57 family.

This is an uncharacterized protein from Acanthamoeba polyphaga (Amoeba).